The following is a 688-amino-acid chain: MAKIRVYELAKELNISSKELITLLEEEFSVEVKNHMSAIEDEDANLIKELLSGKEKSEKTKEEDDEIETTAKNPIKESTNNKKPNKRDDKNEKVNTENAEDMAIITITSETITVKEISDKLEKSYAEVIKELMLMGVMASVNQEINFEMAEKLAAKFDTEILREDEDEEDDLEDILRDNEEEEYLQKRSPIITVMGHVDHGKTSLLDAIRKSKVTSTEAGGITQHIGAYTVELNGEAITFLDTPGHAAFTAMRARGAQVTDIVILVVAADDGIMPQTQEAISHCKAANVPLIVAINKIDRPGANIDKVKQELTEYGLVAEDWGGDTICVPVSAHTKEGIDDLLEMILLSSEILELKANPNRKAKGTVVEAKLDKGRGPVATLLIQNGTLRVGDSIVVGSTYGRIRAMFNDKGRNIKSAGPSTPVEILGLSEVPEAGDKFYQVKEEKTARSIADKRKEKIRDEYLQSTHKVSLEDLYNQIQEGTVKELGLIVKADVQGSVEALKQSLEKLSTGEVKVRVIHGGVGAINETDVTLATASNGIILGFNVRPDNNAIIASEKDGVDIKTYRVIYDAIEDIKSAMLGMLEPEFKEVVIGTAEVRQVYKISSVGTIAGAYIQTGKLARNAGARVIRDGIVIFESELASLKRFKDDAKEVAQGYECGLSIEKFNDIKEGDIIECFIMEEIKKKTL.

Residues 54 to 95 (KEKSEKTKEEDDEIETTAKNPIKESTNNKKPNKRDDKNEKVN) are disordered. Basic and acidic residues predominate over residues 86–95 (KRDDKNEKVN). A tr-type G domain is found at 187-354 (KRSPIITVMG…MILLSSEILE (168 aa)). Positions 196–203 (GHVDHGKT) are G1. 196–203 (GHVDHGKT) contacts GTP. A G2 region spans residues 221–225 (GITQH). The interval 242–245 (DTPG) is G3. Residues 242-246 (DTPGH) and 296-299 (NKID) contribute to the GTP site. A G4 region spans residues 296–299 (NKID). The G5 stretch occupies residues 332–334 (SAH).

This sequence belongs to the TRAFAC class translation factor GTPase superfamily. Classic translation factor GTPase family. IF-2 subfamily.

The protein resides in the cytoplasm. In terms of biological role, one of the essential components for the initiation of protein synthesis. Protects formylmethionyl-tRNA from spontaneous hydrolysis and promotes its binding to the 30S ribosomal subunits. Also involved in the hydrolysis of GTP during the formation of the 70S ribosomal complex. The chain is Translation initiation factor IF-2 from Clostridium botulinum (strain Okra / Type B1).